The following is a 32-amino-acid chain: MSDIN-like toxin proprotein 3 (32 aa).

The propeptide occupies 1 to 10 (MSDINATRLP). The segment at residues 11 to 17 (VWIGYSP) is a cross-link (cyclopeptide (Val-Pro)). Positions 18–32 (CVGDDAVALLNRGEG) are excised as a propeptide.

The protein belongs to the MSDIN fungal toxin family. Post-translationally, processed by the macrocyclase-peptidase enzyme POPB to yield a toxic cyclic heptapeptide. POPB first removes 10 residues from the N-terminus. Conformational trapping of the remaining peptide forces the enzyme to release this intermediate rather than proceed to macrocyclization. The enzyme rebinds the remaining peptide in a different conformation and catalyzes macrocyclization of the N-terminal 7 residues.

Functionally, probable toxin that belongs to the MSDIN-like toxin family responsible for a large number of food poisoning cases and deaths. The chain is MSDIN-like toxin proprotein 3 from Amanita fuligineoides.